The primary structure comprises 595 residues: Aspartate--tRNA(Asp/Asn) ligase (595 aa).

Glutamate 175 is an L-aspartate binding site. The segment at 199–202 (QQYK) is aspartate. Positions 221 and 454 each coordinate L-aspartate. ATP is bound at residue 221 to 223 (RDE). Position 488 (glutamate 488) interacts with ATP. Residue arginine 495 coordinates L-aspartate. 540 to 543 (GIDR) is an ATP binding site.

The protein belongs to the class-II aminoacyl-tRNA synthetase family. Type 1 subfamily. Homodimer.

The protein resides in the cytoplasm. The enzyme catalyses tRNA(Asx) + L-aspartate + ATP = L-aspartyl-tRNA(Asx) + AMP + diphosphate. Functionally, aspartyl-tRNA synthetase with relaxed tRNA specificity since it is able to aspartylate not only its cognate tRNA(Asp) but also tRNA(Asn). Reaction proceeds in two steps: L-aspartate is first activated by ATP to form Asp-AMP and then transferred to the acceptor end of tRNA(Asp/Asn). This chain is Aspartate--tRNA(Asp/Asn) ligase, found in Brucella anthropi (strain ATCC 49188 / DSM 6882 / CCUG 24695 / JCM 21032 / LMG 3331 / NBRC 15819 / NCTC 12168 / Alc 37) (Ochrobactrum anthropi).